A 193-amino-acid polypeptide reads, in one-letter code: Lipopolysaccharide core heptose(II)-phosphate phosphatase (193 aa).

The signal sequence occupies residues 1–25 (MKLKKHVAVLLISFLCLIGLVTQHA).

The protein belongs to the phosphoglycerate mutase family. Ais subfamily.

The protein resides in the periplasm. Its pathway is bacterial outer membrane biogenesis; lipopolysaccharide metabolism. Catalyzes the dephosphorylation of heptose(II) of the outer membrane lipopolysaccharide core. The protein is Lipopolysaccharide core heptose(II)-phosphate phosphatase of Escherichia fergusonii (strain ATCC 35469 / DSM 13698 / CCUG 18766 / IAM 14443 / JCM 21226 / LMG 7866 / NBRC 102419 / NCTC 12128 / CDC 0568-73).